We begin with the raw amino-acid sequence, 134 residues long: MNRRRGILFALASVLLVSVAQLSMRWSMTRLPRPDQWLSVPSVDSVALAVVLAAIFAYALSMLCWLAALRDLPLGRAYSLLSISYALVYLLAASLPLFNESFSFSKSLGVALVMLGVITINTRPARAPELRSSP.

At 1–5 the chain is on the cytoplasmic side; that stretch reads MNRRR. A helical transmembrane segment spans residues 6–26; sequence GILFALASVLLVSVAQLSMRW. The Periplasmic segment spans residues 27–45; it reads SMTRLPRPDQWLSVPSVDS. A helical transmembrane segment spans residues 46-66; sequence VALAVVLAAIFAYALSMLCWL. At 67–77 the chain is on the cytoplasmic side; that stretch reads AALRDLPLGRA. The helical transmembrane segment at 78-98 threads the bilayer; sequence YSLLSISYALVYLLAASLPLF. At 99–101 the chain is on the periplasmic side; it reads NES. The chain crosses the membrane as a helical span at residues 102–122; sequence FSFSKSLGVALVMLGVITINT. The Cytoplasmic segment spans residues 123–134; sequence RPARAPELRSSP.

It belongs to the ArnF family. In terms of assembly, heterodimer of ArnE and ArnF.

It localises to the cell inner membrane. The protein operates within bacterial outer membrane biogenesis; lipopolysaccharide biosynthesis. In terms of biological role, translocates 4-amino-4-deoxy-L-arabinose-phosphoundecaprenol (alpha-L-Ara4N-phosphoundecaprenol) from the cytoplasmic to the periplasmic side of the inner membrane. This is Probable 4-amino-4-deoxy-L-arabinose-phosphoundecaprenol flippase subunit ArnF from Pseudomonas fluorescens (strain Pf0-1).